Reading from the N-terminus, the 574-residue chain is Acetolactate synthase large subunit (574 aa).

E51 is a thiamine diphosphate binding site. Residues R153, 261–282, and 304–323 contribute to the FAD site; these read HGTY…IGVR and DIDP…IVGN. A thiamine pyrophosphate binding region spans residues 397–477; it reads QHQMFAALYY…ILILNLNNKS (81 aa). Mg(2+) is bound by residues D448 and N475.

Belongs to the TPP enzyme family. In terms of assembly, dimer of large and small chains. Requires Mg(2+) as cofactor. Thiamine diphosphate is required as a cofactor.

The enzyme catalyses 2 pyruvate + H(+) = (2S)-2-acetolactate + CO2. Its pathway is amino-acid biosynthesis; L-isoleucine biosynthesis; L-isoleucine from 2-oxobutanoate: step 1/4. It functions in the pathway amino-acid biosynthesis; L-valine biosynthesis; L-valine from pyruvate: step 1/4. The polypeptide is Acetolactate synthase large subunit (ilvI) (Buchnera aphidicola subsp. Schlechtendalia chinensis).